The following is a 426-amino-acid chain: UPF0229 protein YeaH (426 aa).

Positions 78–92 (GNDHFIQNDRIERPQ) are enriched in basic and acidic residues. The disordered stretch occupies residues 78-108 (GNDHFIQNDRIERPQDGGGSGSGNGQASQDG).

Belongs to the UPF0229 family.

This is UPF0229 protein YeaH from Salmonella arizonae (strain ATCC BAA-731 / CDC346-86 / RSK2980).